We begin with the raw amino-acid sequence, 625 residues long: Thrombopoietin receptor (625 aa).

A signal peptide spans 1-25 (MPSWALFMVTSCLLLALPNQAQVTS). Residues 26 to 482 (QDVFLLALGT…RVSTGSETAW (457 aa)) are Extracellular-facing. N-linked (GlcNAc...) asparagine glycosylation occurs at N117. Fibronectin type-III domains are found at residues 178 to 270 (NATA…PVTV) and 383 to 479 (PTPS…TGSE). Positions 465 to 469 (WSAWS) match the WSXWS motif motif. Residues 483 to 504 (ITLVTALLLVLSLSALLGLLLL) form a helical membrane-spanning segment. Residues 505–625 (KWQFPAHYRR…YLPLSYWQQP (121 aa)) are Cytoplasmic-facing. The Box 1 motif motif lies at 519 to 527 (LWPSLPDLH). Glycyl lysine isopeptide (Lys-Gly) (interchain with G-Cter in ubiquitin) cross-links involve residues K544 and K564. Y616 and Y621 each carry phosphotyrosine.

The protein belongs to the type I cytokine receptor family. Type 1 subfamily. In terms of assembly, homodimer. Interacts with ATXN2L. Interacts with JAK2 and TYK2; these interactions increase MPL localization to the cell membrane. Interacts with THPO. Interacts with SHIP/INPP5D. Interacts with kinases BTK and SYK. Post-translationally, ubiquitination at Lys-544 and Lys-564 targets MPL for degradation by both the lysosomal and proteasomal pathways. The E3 ubiquitin-protein ligase CBL significantly contributes to this ubiquitination.

Its subcellular location is the cell membrane. It localises to the golgi apparatus. The protein resides in the cell surface. Receptor for thrombopoietin that regulates hematopoietic stem cell renewal, megakaryocyte differentiation, and platelet formation. Upon activation by THPO, induces rapid tyrosine phosphorylation and activation of JAK2, providing docking sites for many signaling proteins such as STAT5, SHIP/INPP5D, GRB2, SOS1 and PI3K. In turn, These signaling cascades lead to the proliferation, survival, and differentiation of megakaryocytes, ultimately leading to increased platelet production. Its function is as follows. Acts as an inhibitor of thrombopoietin signaling by promoting protein down-regulation of full-length isoform Mpl-fl. In Mus musculus (Mouse), this protein is Thrombopoietin receptor (Mpl).